A 342-amino-acid chain; its full sequence is Subtilisin-like serine protease Rho m 2.0101 (342 aa).

Positions 1–30 (TMELLEDLIEQVRQLPMVNFIEKNSLVHAN) are cleaved as a propeptide — removed in mature form. Residues 1 to 30 (TMELLEDLIEQVRQLPMVNFIEKNSLVHAN) form the Inhibitor I9 domain. One can recognise a Peptidase S8 domain in the interval 39–342 (PWGLARISHR…GQNLTKFWGH (304 aa)). Residues D75 and H107 each act as charge relay system in the active site. Residues N137 and N171 are each glycosylated (N-linked (GlcNAc...) asparagine). Catalysis depends on S267, which acts as the Charge relay system. An N-linked (GlcNAc...) asparagine glycan is attached at N335.

The protein belongs to the peptidase S8 family.

Serine protease. In Rhodotorula mucilaginosa (Yeast), this protein is Subtilisin-like serine protease Rho m 2.0101.